The chain runs to 198 residues: Nucleoside triphosphate pyrophosphatase (198 aa).

The active-site Proton acceptor is aspartate 72.

The protein belongs to the Maf family. The cofactor is a divalent metal cation.

The protein localises to the cytoplasm. It carries out the reaction a ribonucleoside 5'-triphosphate + H2O = a ribonucleoside 5'-phosphate + diphosphate + H(+). It catalyses the reaction a 2'-deoxyribonucleoside 5'-triphosphate + H2O = a 2'-deoxyribonucleoside 5'-phosphate + diphosphate + H(+). In terms of biological role, nucleoside triphosphate pyrophosphatase. May have a dual role in cell division arrest and in preventing the incorporation of modified nucleotides into cellular nucleic acids. This chain is Nucleoside triphosphate pyrophosphatase, found in Acinetobacter baylyi (strain ATCC 33305 / BD413 / ADP1).